The sequence spans 993 residues: Chromosome transmission fidelity protein 18 homolog (993 aa).

A disordered region spans residues 26-72; the sequence is PDEFNAYDGPSTSKQAAEKQKENRAPVAALRDSTRLGNSTLGSPQLS. Over residues 60-72 the composition is skewed to polar residues; the sequence is RLGNSTLGSPQLS. Position 427-434 (427-434) interacts with ATP; the sequence is GPPGLGKT. A disordered region spans residues 892 to 913; the sequence is AAPKGGAPSAPAAKKKTSGAAA. The span at 894 to 913 shows a compositional bias: low complexity; it reads PKGGAPSAPAAKKKTSGAAA.

It belongs to the activator 1 small subunits family. CTF18 subfamily. As to quaternary structure, component of the CTF18-RFC complex.

It is found in the nucleus. In terms of biological role, chromosome cohesion factor involved in sister chromatid cohesion and fidelity of chromosome transmission. Component of one of the cell nuclear antigen loader complexes, CTF18-replication factor C (CTF18-RFC). The CTF18-RFC complex catalyzes the ATP-dependent loading of PCNA onto primed and gapped DNA and has weak ATPase activity. The CTF18-RFC complex catalyzes the ATP-dependent loading of PCNA onto primed and gapped DNA. This Drosophila melanogaster (Fruit fly) protein is Chromosome transmission fidelity protein 18 homolog.